The following is a 611-amino-acid chain: Protein Spindly (611 aa).

Positions 1–288 form a coiled coil; the sequence is MEESETVLKL…QFQSLQKQHA (288 aa). The span at 499-511 shows a compositional bias: basic and acidic residues; it reads LKEDSSLSTKEQD. The disordered stretch occupies residues 499-611; sequence LKEDSSLSTK…PAATTQCPQQ (113 aa). Residues 549-567 are compositionally biased toward polar residues; the sequence is RNTNNCSVTSTSPRSASEE. A compositionally biased stretch (basic and acidic residues) spans 570-583; the sequence is SESKRFDEEQEKRK.

The protein belongs to the Spindly family.

The protein localises to the chromosome. Its subcellular location is the centromere. It is found in the kinetochore. In terms of biological role, required for the localization of dynein and dynactin to the mitotic kintochore. Dynein is believed to control the initial lateral interaction between the kinetochore and spindle microtubules and to facilitate the subsequent formation of end-on kinetochore-microtubule attachments mediated by the NDC80 complex. May act as an adapter protein linking the dynein motor complex to various cargos. The chain is Protein Spindly (spdl1) from Xenopus tropicalis (Western clawed frog).